The primary structure comprises 584 residues: Mitochondrial sodium/calcium exchanger protein (584 aa).

Positions 1-26 are cleaved as a signal peptide; it reads MAGRRLNLRWALSVLCVLLMAETVSG. The Extracellular portion of the chain corresponds to 27–95; sequence TRGSSTGAHI…GIFCHFPPSL (69 aa). An N-linked (GlcNAc...) asparagine glycan is attached at Asn60. The chain crosses the membrane as a helical span at residues 96 to 116; that stretch reads LPLAVTLYVSWLLYLFLILGV. At 117 to 140 the chain is on the cytoplasmic side; the sequence is TAAKFFCPNLSAISTTLKLSHNVA. The chain crosses the membrane as a helical span at residues 141–161; that stretch reads GVTFLAFGNGAPDIFSALVAF. Residues 162–168 lie on the Extracellular side of the membrane; sequence SDPHTAG. Residues 169–189 traverse the membrane as a helical segment; sequence LALGALFGAGVLVTTVVAGGI. The Cytoplasmic segment spans residues 190-200; it reads TILHPFMAASR. A helical transmembrane segment spans residues 201 to 221; that stretch reads PFFRDIVFYMVAVFLTFLMLF. At 222–226 the chain is on the extracellular side; it reads RGRVT. A helical transmembrane segment spans residues 227–247; that stretch reads LAWALGYLGLYVFYVVTVILC. The Cytoplasmic segment spans residues 248 to 325; that stretch reads TWIYQRQRRG…KWRRKSAYWK (78 aa). Ser258 carries the post-translational modification Phosphoserine; by PKA. Residues 326–346 traverse the membrane as a helical segment; that stretch reads ALKVFKLPVEFLLLLTVPVVD. Topologically, residues 347-360 are extracellular; it reads PDKDDQNWKRPLNC. A helical membrane pass occupies residues 361 to 381; the sequence is LHLVISPLVVVLTLQSGTYGV. The Cytoplasmic portion of the chain corresponds to 382 to 383; the sequence is YE. A helical membrane pass occupies residues 384 to 404; it reads IGGLVPVWVVVVIAGTALASV. Residues 405–416 lie on the Extracellular side of the membrane; sequence TFFATSDSQPPR. Residues 417-437 form a helical membrane-spanning segment; sequence LHWLFAFLGFLTSALWINAAA. Residues 438–445 are Cytoplasmic-facing; it reads TEVVNILR. The helical transmembrane segment at 446–466 threads the bilayer; the sequence is SLGVVFRLSNTVLGLTLLAWG. Residues 467 to 487 are Extracellular-facing; it reads NSIGDAFSDFTLARQGYPRMA. The chain crosses the membrane as a helical span at residues 488–508; the sequence is FSACFGGIIFNILVGVGLGCL. The Cytoplasmic portion of the chain corresponds to 509 to 524; sequence LQISRSHTEVKLEPDG. A helical transmembrane segment spans residues 525 to 545; that stretch reads LLVWVLAGALGLSLVFSLVSV. At 546 to 558 the chain is on the extracellular side; the sequence is PLQCFQLSRVYGF. The chain crosses the membrane as a helical span at residues 559–579; it reads CLLLFYLNFLVVALLTEFGVI. The Cytoplasmic portion of the chain corresponds to 580-584; the sequence is HLKSM.

The protein belongs to the Ca(2+):cation antiporter (CaCA) (TC 2.A.19) family. SLC24A subfamily. Post-translationally, phosphorylation at Ser-258 by PKA prevents calcium overload. In terms of tissue distribution, present in pancreatic beta-cells (at protein level).

Its subcellular location is the mitochondrion inner membrane. It catalyses the reaction Ca(2+)(in) + 3 Na(+)(out) = Ca(2+)(out) + 3 Na(+)(in). The catalysed reaction is 3 Li(+)(out) + Ca(2+)(in) = 3 Li(+)(in) + Ca(2+)(out). With respect to regulation, inhibited by the sodium/calcium exchanger inhibitor CGP-37157. Strongly inhibited by zinc. In terms of biological role, mitochondrial sodium/calcium antiporter that mediates sodium-dependent calcium efflux from mitochondrion, by mediating the exchange of 3 sodium ions per 1 calcium ion. Plays a central role in mitochondrial calcium homeostasis by mediating mitochondrial calcium extrusion: calcium efflux is essential for mitochondrial function and cell survival, notably in cardiomyocytes. Regulates rates of glucose-dependent insulin secretion in pancreatic beta-cells during the first phase of insulin secretion: acts by mediating efflux of calcium from mitochondrion, thereby affecting cytoplasmic calcium responses. Required for store-operated Ca(2+) entry (SOCE) and Ca(2+) release-activated Ca(2+) (CRAC) channel regulation: sodium transport by SLC8B1 leads to promote calcium-shuttling that modulates mitochondrial redox status, thereby regulating SOCE activity. Involved in B-lymphocyte chemotaxis. Able to transport Ca(2+) in exchange of either Li(+) or Na(+), explaining how Li(+) catalyzes Ca(2+) exchange. In contrast to other members of the family its function is independent of K(+). This chain is Mitochondrial sodium/calcium exchanger protein, found in Homo sapiens (Human).